The following is a 35-amino-acid chain: Ranatuerin-2SPa (35 aa).

Cysteines 28 and 33 form a disulfide.

Expressed by the skin glands.

The protein localises to the secreted. Its function is as follows. Antibacterial activity against Gram-positive bacterium S.aureus. Shows no detectable hemolytic activity towards human erythrocytes. In Lithobates septentrionalis (Mink frog), this protein is Ranatuerin-2SPa.